The chain runs to 202 residues: NADH-quinone oxidoreductase subunit C (202 aa).

It belongs to the complex I 30 kDa subunit family. As to quaternary structure, NDH-1 is composed of 14 different subunits. Subunits NuoB, C, D, E, F, and G constitute the peripheral sector of the complex.

It is found in the cell inner membrane. The enzyme catalyses a quinone + NADH + 5 H(+)(in) = a quinol + NAD(+) + 4 H(+)(out). Its function is as follows. NDH-1 shuttles electrons from NADH, via FMN and iron-sulfur (Fe-S) centers, to quinones in the respiratory chain. The immediate electron acceptor for the enzyme in this species is believed to be ubiquinone. Couples the redox reaction to proton translocation (for every two electrons transferred, four hydrogen ions are translocated across the cytoplasmic membrane), and thus conserves the redox energy in a proton gradient. In Acidovorax sp. (strain JS42), this protein is NADH-quinone oxidoreductase subunit C.